Reading from the N-terminus, the 185-residue chain is Elongation factor P (185 aa).

Belongs to the elongation factor P family.

It is found in the cytoplasm. It functions in the pathway protein biosynthesis; polypeptide chain elongation. Its function is as follows. Involved in peptide bond synthesis. Stimulates efficient translation and peptide-bond synthesis on native or reconstituted 70S ribosomes in vitro. Probably functions indirectly by altering the affinity of the ribosome for aminoacyl-tRNA, thus increasing their reactivity as acceptors for peptidyl transferase. This chain is Elongation factor P, found in Bacillus mycoides (strain KBAB4) (Bacillus weihenstephanensis).